Consider the following 113-residue polypeptide: Iron-sulfur cluster insertion protein ErpA (113 aa).

Positions 41, 105, and 107 each coordinate iron-sulfur cluster.

Belongs to the HesB/IscA family. In terms of assembly, homodimer. It depends on iron-sulfur cluster as a cofactor.

Functionally, required for insertion of 4Fe-4S clusters for at least IspG. This Histophilus somni (strain 2336) (Haemophilus somnus) protein is Iron-sulfur cluster insertion protein ErpA.